Here is a 237-residue protein sequence, read N- to C-terminus: Uracil-DNA glycosylase (237 aa).

Residue Asp-77 is the Proton acceptor of the active site.

The protein belongs to the uracil-DNA glycosylase (UDG) superfamily. UNG family.

The protein resides in the cytoplasm. It carries out the reaction Hydrolyzes single-stranded DNA or mismatched double-stranded DNA and polynucleotides, releasing free uracil.. Functionally, excises uracil residues from the DNA which can arise as a result of misincorporation of dUMP residues by DNA polymerase or due to deamination of cytosine. The protein is Uracil-DNA glycosylase of Acinetobacter baumannii (strain AB307-0294).